Reading from the N-terminus, the 76-residue chain is Omega-scoloptoxin(15)-Ssd3c (76 aa).

The N-terminal stretch at 1–23 (MEKKIIFLVVLVALLALPEFISS) is a signal peptide.

This sequence belongs to the scoloptoxin-15 family. Post-translationally, contains 2 disulfide bonds. As to expression, expressed by the venom gland.

The protein resides in the secreted. Functionally, voltage-gated calcium channel inhibitor (Cav) (8.6% block at 10 nM), when tested on DRG neurons. This chain is Omega-scoloptoxin(15)-Ssd3c, found in Scolopendra dehaani (Thai centipede).